Reading from the N-terminus, the 100-residue chain is UPF0213 protein YhbQ (100 aa).

Residues Thr2–Arg77 form the GIY-YIG domain.

Belongs to the UPF0213 family.

The protein is UPF0213 protein YhbQ of Salmonella arizonae (strain ATCC BAA-731 / CDC346-86 / RSK2980).